A 615-amino-acid chain; its full sequence is 9-cis-epoxycarotenoid dioxygenase NCED1, chloroplastic (615 aa).

The N-terminal 41 residues, 1–41 (MPSPASNTWINTTLPSSCSSPFKDLASTSSSPTTLLPFKKR), are a transit peptide targeting the chloroplast. Disordered regions lie at residues 20 to 45 (SPFKDLASTSSSPTTLLPFKKRSSSN) and 62 to 101 (YQPTSTSTTTTPTPIKPTTTTTTTTPHRETKPLSDTKQPF). 2 stretches are compositionally biased toward low complexity: residues 27–37 (STSSSPTTLLP) and 64–86 (PTSTSTTTTPTPIKPTTTTTTTT). Fe cation-binding residues include H316, H365, and H430. Positions 571 to 592 (KEWKSELQIVNAQNLKLEASIK) form a coiled coil. A Fe cation-binding site is contributed by H602.

The protein belongs to the carotenoid oxygenase family. The cofactor is Fe(2+).

Its subcellular location is the plastid. It is found in the chloroplast thylakoid membrane. It catalyses the reaction a 9-cis-epoxycarotenoid + O2 = a 12'-apo-carotenal + 2-cis,4-trans-xanthoxin. The catalysed reaction is 9-cis-violaxanthin + O2 = (3S,5R,6S)-5,6-epoxy-3-hydroxy-5,6-dihydro-12'-apo-beta-caroten-12'-al + 2-cis,4-trans-xanthoxin. It carries out the reaction 9'-cis-neoxanthin + O2 = (3S,5R,6R)-3,5-dihydroxy-6,7-didehydro-5,6-dihydro-12'-apo-beta-caroten-12'-al + 2-cis,4-trans-xanthoxin. Has a 11,12(11',12') 9-cis epoxycarotenoid cleavage activity. Catalyzes the first step of abscisic-acid biosynthesis from carotenoids, in response to water stress. Active on 9-cis-violaxanthin and 9'-cis-neoxanthin, but not on the all-trans isomers of violaxanthin and neoxanthin. The polypeptide is 9-cis-epoxycarotenoid dioxygenase NCED1, chloroplastic (NCED1) (Phaseolus vulgaris (Kidney bean)).